A 110-amino-acid chain; its full sequence is Large ribosomal subunit protein uL22 (110 aa).

Belongs to the universal ribosomal protein uL22 family. Part of the 50S ribosomal subunit.

In terms of biological role, this protein binds specifically to 23S rRNA; its binding is stimulated by other ribosomal proteins, e.g. L4, L17, and L20. It is important during the early stages of 50S assembly. It makes multiple contacts with different domains of the 23S rRNA in the assembled 50S subunit and ribosome. Functionally, the globular domain of the protein is located near the polypeptide exit tunnel on the outside of the subunit, while an extended beta-hairpin is found that lines the wall of the exit tunnel in the center of the 70S ribosome. This Klebsiella pneumoniae (strain 342) protein is Large ribosomal subunit protein uL22.